The primary structure comprises 513 residues: ATP synthase subunit alpha (513 aa).

Residue 169-176 (GDRQCGKT) participates in ATP binding.

It belongs to the ATPase alpha/beta chains family. As to quaternary structure, F-type ATPases have 2 components, CF(1) - the catalytic core - and CF(0) - the membrane proton channel. CF(1) has five subunits: alpha(3), beta(3), gamma(1), delta(1), epsilon(1). CF(0) has three main subunits: a(1), b(2) and c(9-12). The alpha and beta chains form an alternating ring which encloses part of the gamma chain. CF(1) is attached to CF(0) by a central stalk formed by the gamma and epsilon chains, while a peripheral stalk is formed by the delta and b chains.

It is found in the cell inner membrane. It catalyses the reaction ATP + H2O + 4 H(+)(in) = ADP + phosphate + 5 H(+)(out). Its function is as follows. Produces ATP from ADP in the presence of a proton gradient across the membrane. The alpha chain is a regulatory subunit. The chain is ATP synthase subunit alpha from Burkholderia orbicola (strain AU 1054).